We begin with the raw amino-acid sequence, 295 residues long: Undecaprenyl-diphosphatase (295 aa).

Helical transmembrane passes span 12–34, 50–70, 95–115, 120–140, 209–229, 243–263, and 272–292; these read IAIAILQGATELFPVSSLGHAVV, FLPFLVFLHLGTAAALLLYFW, IFMLLVVATLPAIVVGGLLEH, LFESAPIAAFFLVVNGGLLLF, AHFSFLIALPIILGATVLEVP, TAALAAVAAGITAWLSTAFLM, and WALKPFAFYCIIAGLGALAWL.

It belongs to the UppP family.

The protein localises to the cell inner membrane. It catalyses the reaction di-trans,octa-cis-undecaprenyl diphosphate + H2O = di-trans,octa-cis-undecaprenyl phosphate + phosphate + H(+). In terms of biological role, catalyzes the dephosphorylation of undecaprenyl diphosphate (UPP). Confers resistance to bacitracin. The sequence is that of Undecaprenyl-diphosphatase from Granulibacter bethesdensis (strain ATCC BAA-1260 / CGDNIH1).